A 261-amino-acid chain; its full sequence is Enolase-phosphatase E1 (261 aa).

Mg(2+) is bound by residues Asp-16 and Glu-18. Substrate contacts are provided by residues 153-154 (SS) and Lys-187. Mg(2+) is bound at residue Asp-212.

The protein belongs to the HAD-like hydrolase superfamily. MasA/MtnC family. Monomer. Requires Mg(2+) as cofactor.

It localises to the cytoplasm. The protein resides in the nucleus. The enzyme catalyses 5-methylsulfanyl-2,3-dioxopentyl phosphate + H2O = 1,2-dihydroxy-5-(methylsulfanyl)pent-1-en-3-one + phosphate. Its pathway is amino-acid biosynthesis; L-methionine biosynthesis via salvage pathway; L-methionine from S-methyl-5-thio-alpha-D-ribose 1-phosphate: step 3/6. It functions in the pathway amino-acid biosynthesis; L-methionine biosynthesis via salvage pathway; L-methionine from S-methyl-5-thio-alpha-D-ribose 1-phosphate: step 4/6. In terms of biological role, bifunctional enzyme that catalyzes the enolization of 2,3-diketo-5-methylthiopentyl-1-phosphate (DK-MTP-1-P) into the intermediate 2-hydroxy-3-keto-5-methylthiopentenyl-1-phosphate (HK-MTPenyl-1-P), which is then dephosphorylated to form the acireductone 1,2-dihydroxy-3-keto-5-methylthiopentene (DHK-MTPene). The chain is Enolase-phosphatase E1 (enoph1) from Salmo salar (Atlantic salmon).